Consider the following 197-residue polypeptide: HTH-type transcriptional regulator BetI (197 aa).

The region spanning 8-68 (PIRRQQLIEA…ATMRYLMSVL (61 aa)) is the HTH tetR-type domain. A DNA-binding region (H-T-H motif) is located at residues 31–50 (SIALIARLAGVSNGIISHYF).

It functions in the pathway amine and polyamine biosynthesis; betaine biosynthesis via choline pathway [regulation]. Repressor involved in the biosynthesis of the osmoprotectant glycine betaine. It represses transcription of the choline transporter BetT and the genes of BetAB involved in the synthesis of glycine betaine. The polypeptide is HTH-type transcriptional regulator BetI (Pseudomonas fluorescens (strain Pf0-1)).